The sequence spans 713 residues: BBSome complex assembly protein BBS10 (713 aa).

It belongs to the TCP-1 chaperonin family. Component of a complex composed at least of MKKS, BBS10, BBS12, TCP1, CCT2, CCT3, CCT4, CCT5 and CCT8.

The protein localises to the cell projection. The protein resides in the cilium. In terms of biological role, probable molecular chaperone that assists the folding of proteins upon ATP hydrolysis. Plays a role in the assembly of BBSome, a complex involved in ciliogenesis regulating transports vesicles to the cilia. Involved in adipogenic differentiation. The polypeptide is BBSome complex assembly protein BBS10 (Bbs10) (Mus musculus (Mouse)).